The following is a 246-amino-acid chain: MSDSSSSSENAPATPESPGRPPRGIKSYVLRAGRMTAAQSRGLEEVWPRLGLSVAEGRQSLEALFGRRAPCVVEVGFGMGQSLVEQAAANPETDFIGIEVHAPGVGKLLDEADKRGLTNLRVYRDDALEVLDKCLPESSLTGLQLFFPDPWPKKKHHKRRIVQPAFVELVRTRLAPHGYLHMATDWEAYAEHMVEVMEEAPGYRNTAPPESAPYVPRPEFRPLTKFESRGERLGHGVWDLIYARVE.

The segment at 1–26 (MSDSSSSSENAPATPESPGRPPRGIK) is disordered. Residues E74, E99, D126, and D149 each coordinate S-adenosyl-L-methionine. The active site involves D149. Residues K153, D185, and 224–227 (TKFE) contribute to the substrate site.

The protein belongs to the class I-like SAM-binding methyltransferase superfamily. TrmB family.

It carries out the reaction guanosine(46) in tRNA + S-adenosyl-L-methionine = N(7)-methylguanosine(46) in tRNA + S-adenosyl-L-homocysteine. It participates in tRNA modification; N(7)-methylguanine-tRNA biosynthesis. Catalyzes the formation of N(7)-methylguanine at position 46 (m7G46) in tRNA. This Chromohalobacter salexigens (strain ATCC BAA-138 / DSM 3043 / CIP 106854 / NCIMB 13768 / 1H11) protein is tRNA (guanine-N(7)-)-methyltransferase.